Consider the following 329-residue polypeptide: UDP-2,3-diacylglucosamine pyrophosphatase LpxG (329 aa).

The chain crosses the membrane as a helical span at residues 2 to 24 (FVSVGITASLTTILAAPVLTWVW). A divalent metal cation is bound by residues Asp-59, His-61, Asp-91, Asn-123, His-257, and His-259.

This sequence belongs to the metallophosphoesterase superfamily. LpxG family. It depends on Mn(2+) as a cofactor.

The protein localises to the cell inner membrane. The enzyme catalyses UDP-2,3-diacyl-alpha-D-glucosamine + H2O = 2,3-diacyl-alpha-D-glucosaminyl 1-phosphate + UMP + 2 H(+). It functions in the pathway glycolipid biosynthesis; lipid IV(A) biosynthesis. In terms of biological role, hydrolyzes the pyrophosphate bond of UDP-2,3-diacylglucosamine to form 2,3-diacylglucosamine 1-phosphate (lipid X) and UMP by catalyzing the attack of water at the alpha-P atom. Involved in the biosynthesis of lipid A, a phosphorylated glycolipid that anchors the lipooligosaccharide (LOS) to the outer membrane of the cell. Can functionally complement lpxH deficiency in E.coli. Overexpression of LpxG results in toxic accumulation of lipid X and profoundly reduces the infectivity of C.trachomatis. Can utilize UDP-2-N,3-O-bis((3R)-3-hydroxytetradecanoyl)-alpha-D-glucosamine as substrate in vitro, but the substrate is likely UDP-2-N-((3R)-3-hydroxyicosanoyl),3-O-(tetradecanoyl)-alpha-D-glucosamine in vivo. This chain is UDP-2,3-diacylglucosamine pyrophosphatase LpxG, found in Chlamydia trachomatis serovar D (strain ATCC VR-885 / DSM 19411 / UW-3/Cx).